The sequence spans 101 residues: Protein Tat (101 aa).

Residues 1–24 form an interaction with human CREBBP region; the sequence is MEPVDPSLDPWNHPGSQPTTPCTK. The tract at residues 1 to 48 is transactivation; that stretch reads MEPVDPSLDPWNHPGSQPTTPCTKCYCKRCCFHCQWCFTTKGLGISYG. Zn(2+) is bound by residues cysteine 22, cysteine 25, and cysteine 27. A cysteine-rich region spans residues 22 to 37; that stretch reads CTKCYCKRCCFHCQWC. At lysine 28 the chain carries N6-acetyllysine; by host PCAF. The Zn(2+) site is built by cysteine 30, histidine 33, cysteine 34, and cysteine 37. A core region spans residues 38–48; sequence FTTKGLGISYG. A compositionally biased stretch (basic residues) spans 48-58; that stretch reads GRKKRRQRHRT. Positions 48–101 are disordered; sequence GRKKRRQRHRTPQSSQVHQNSLPKQPLSQARGDPTGPKESKKEVESKAKTDPCA. The Nuclear localization signal, RNA-binding (TAR), and protein transduction motif lies at 49–57; it reads RKKRRQRHR. The interaction with the host capping enzyme RNGTT stretch occupies residues 49–86; that stretch reads RKKRRQRHRTPQSSQVHQNSLPKQPLSQARGDPTGPKE. Residues lysine 50 and lysine 51 each carry the N6-acetyllysine; by host EP300 and GCN5L2 modification. Residues arginine 52 and arginine 53 each carry the asymmetric dimethylarginine; by host PRMT6 modification. Residues 59–75 are compositionally biased toward polar residues; that stretch reads PQSSQVHQNSLPKQPLS. A Glycyl lysine isopeptide (Lys-Gly) (interchain with G-Cter in ubiquitin) cross-link involves residue lysine 71. The Cell attachment site motif lies at 78 to 80; that stretch reads RGD. A compositionally biased stretch (basic and acidic residues) spans 83 to 101; the sequence is GPKESKKEVESKAKTDPCA.

This sequence belongs to the lentiviruses Tat family. In terms of assembly, interacts with host CCNT1. Associates with the P-TEFb complex composed at least of Tat, P-TEFb (CDK9 and CCNT1), TAR RNA, RNA Pol II. Recruits the HATs CREBBP, TAF1/TFIID, EP300, PCAF and GCN5L2. Interacts with host KAT5/Tip60; this interaction targets the latter to degradation. Interacts with the host deacetylase SIRT1. Interacts with host capping enzyme RNGTT; this interaction stimulates RNGTT. Binds to host KDR, and to the host integrins ITGAV/ITGB3 and ITGA5/ITGB1. Interacts with host KPNB1/importin beta-1 without previous binding to KPNA1/importin alpha-1. Interacts with EIF2AK2. Interacts with host nucleosome assembly protein NAP1L1; this interaction may be required for the transport of Tat within the nucleus, since the two proteins interact at the nuclear rim. Interacts with host C1QBP/SF2P32; this interaction involves lysine-acetylated Tat. Interacts with the host chemokine receptors CCR2, CCR3 and CXCR4. Interacts with host DPP4/CD26; this interaction may trigger an anti-proliferative effect. Interacts with host LDLR. Interacts with the host extracellular matrix metalloproteinase MMP1. Interacts with host PRMT6; this interaction mediates Tat's methylation. Interacts with, and is ubiquitinated by MDM2/Hdm2. Interacts with host PSMC3 and HTATIP2. Interacts with STAB1; this interaction may overcome SATB1-mediated repression of IL2 and IL2RA (interleukin) in T cells by binding to the same domain than HDAC1. Interacts (when acetylated) with human CDK13, thereby increasing HIV-1 mRNA splicing and promoting the production of the doubly spliced HIV-1 protein Nef. Interacts with host TBP; this interaction modulates the activity of transcriptional pre-initiation complex. Interacts with host RELA. Interacts with host PLSCR1; this interaction negatively regulates Tat transactivation activity by altering its subcellular distribution. In terms of processing, asymmetrical arginine methylation by host PRMT6 seems to diminish the transactivation capacity of Tat and affects the interaction with host CCNT1. Post-translationally, acetylation by EP300, CREBBP, GCN5L2/GCN5 and PCAF regulates the transactivation activity of Tat. EP300-mediated acetylation of Lys-50 promotes dissociation of Tat from the TAR RNA through the competitive binding to PCAF's bromodomain. In addition, the non-acetylated Tat's N-terminus can also interact with PCAF. PCAF-mediated acetylation of Lys-28 enhances Tat's binding to CCNT1. Lys-50 is deacetylated by SIRT1. Polyubiquitination by host MDM2 does not target Tat to degradation, but activates its transactivation function and fosters interaction with CCNT1 and TAR RNA. In terms of processing, phosphorylated by EIF2AK2 on serine and threonine residues adjacent to the basic region important for TAR RNA binding and function. Phosphorylation of Tat by EIF2AK2 is dependent on the prior activation of EIF2AK2 by dsRNA.

It localises to the host nucleus. The protein resides in the host nucleolus. The protein localises to the host cytoplasm. Its subcellular location is the secreted. In terms of biological role, transcriptional activator that increases RNA Pol II processivity, thereby increasing the level of full-length viral transcripts. Recognizes a hairpin structure at the 5'-LTR of the nascent viral mRNAs referred to as the transactivation responsive RNA element (TAR) and recruits the cyclin T1-CDK9 complex (P-TEFb complex) that will in turn hyperphosphorylate the RNA polymerase II to allow efficient elongation. The CDK9 component of P-TEFb and other Tat-activated kinases hyperphosphorylate the C-terminus of RNA Pol II that becomes stabilized and much more processive. Other factors such as HTATSF1/Tat-SF1, SUPT5H/SPT5, and HTATIP2 are also important for Tat's function. Besides its effect on RNA Pol II processivity, Tat induces chromatin remodeling of proviral genes by recruiting the histone acetyltransferases (HATs) CREBBP, EP300 and PCAF to the chromatin. This also contributes to the increase in proviral transcription rate, especially when the provirus integrates in transcriptionally silent region of the host genome. To ensure maximal activation of the LTR, Tat mediates nuclear translocation of NF-kappa-B by interacting with host RELA. Through its interaction with host TBP, Tat may also modulate transcription initiation. Tat can reactivate a latently infected cell by penetrating in it and transactivating its LTR promoter. In the cytoplasm, Tat is thought to act as a translational activator of HIV-1 mRNAs. Extracellular circulating Tat can be endocytosed by surrounding uninfected cells via the binding to several surface receptors such as CD26, CXCR4, heparan sulfate proteoglycans (HSPG) or LDLR. Neurons are rarely infected, but they internalize Tat via their LDLR. Through its interaction with nuclear HATs, Tat is potentially able to control the acetylation-dependent cellular gene expression. Modulates the expression of many cellular genes involved in cell survival, proliferation or in coding for cytokines or cytokine receptors. Tat plays a role in T-cell and neurons apoptosis. Tat induced neurotoxicity and apoptosis probably contribute to neuroAIDS. Circulating Tat also acts as a chemokine-like and/or growth factor-like molecule that binds to specific receptors on the surface of the cells, affecting many cellular pathways. In the vascular system, Tat binds to ITGAV/ITGB3 and ITGA5/ITGB1 integrins dimers at the surface of endothelial cells and competes with bFGF for heparin-binding sites, leading to an excess of soluble bFGF. The sequence is that of Protein Tat from Human immunodeficiency virus type 1 group M subtype F1 (isolate VI850) (HIV-1).